A 1072-amino-acid chain; its full sequence is DNA-directed RNA polymerase subunit beta (1072 aa).

This sequence belongs to the RNA polymerase beta chain family. As to quaternary structure, in plastids the minimal PEP RNA polymerase catalytic core is composed of four subunits: alpha, beta, beta', and beta''. When a (nuclear-encoded) sigma factor is associated with the core the holoenzyme is formed, which can initiate transcription.

The protein resides in the plastid. The protein localises to the chloroplast. The enzyme catalyses RNA(n) + a ribonucleoside 5'-triphosphate = RNA(n+1) + diphosphate. Its function is as follows. DNA-dependent RNA polymerase catalyzes the transcription of DNA into RNA using the four ribonucleoside triphosphates as substrates. This is DNA-directed RNA polymerase subunit beta from Lobularia maritima (Sweet alyssum).